The following is a 282-amino-acid chain: Probable endonuclease 4 (282 aa).

9 residues coordinate Zn(2+): His69, His109, Glu145, Asp179, His182, His216, Asp229, His231, and Glu261.

The protein belongs to the AP endonuclease 2 family. Zn(2+) is required as a cofactor.

It catalyses the reaction Endonucleolytic cleavage to 5'-phosphooligonucleotide end-products.. Its function is as follows. Endonuclease IV plays a role in DNA repair. It cleaves phosphodiester bonds at apurinic or apyrimidinic (AP) sites, generating a 3'-hydroxyl group and a 5'-terminal sugar phosphate. This Magnetococcus marinus (strain ATCC BAA-1437 / JCM 17883 / MC-1) protein is Probable endonuclease 4.